The following is a 272-amino-acid chain: Protein UL24 homolog (272 aa).

The protein belongs to the herpesviridae UL24 family.

Its subcellular location is the virion. The protein localises to the host cytoplasm. The protein resides in the host nucleus. It is found in the host nucleolus. It localises to the host Golgi apparatus. May participate in nuclear egress of viral particles. Plays a role in the dispersal of several host nucleolar proteins including NCL/nucleolin and NPM1. Since deletion of host NCL/nucleolin negatively impact on nuclear egress, UL24 supposedly acts on this process through its effect on host nucleoli. The sequence is that of Protein UL24 homolog from Equine herpesvirus 1 (strain V592) (EHV-1).